We begin with the raw amino-acid sequence, 325 residues long: Delta(1)-pyrroline-2-carboxylate reductase (325 aa).

This sequence belongs to the ornithine cyclodeaminase/mu-crystallin family.

The catalysed reaction is L-proline + NAD(+) = 1-pyrroline-2-carboxylate + NADH + H(+). The enzyme catalyses L-proline + NADP(+) = 1-pyrroline-2-carboxylate + NADPH + H(+). Its function is as follows. Catalyzes the reduction of Delta(1)-pyrroline-2-carboxylate (Pyr2C) to L-proline, using preferentially NADPH over NADH as the electron donor. Is likely involved in a degradation pathway that converts trans-3-hydroxy-L-proline (t3LHyp) to L-proline, which allows B.cereus to grow on t3LHyp as a sole carbon source. The polypeptide is Delta(1)-pyrroline-2-carboxylate reductase (Bacillus cereus (strain ATCC 14579 / DSM 31 / CCUG 7414 / JCM 2152 / NBRC 15305 / NCIMB 9373 / NCTC 2599 / NRRL B-3711)).